The primary structure comprises 291 residues: Acetyl-coenzyme A carboxylase carboxyl transferase subunit beta (291 aa).

Positions 29–291 (LWSKCPECGE…MHQQPAAVSA (263 aa)) constitute a CoA carboxyltransferase N-terminal domain. 4 residues coordinate Zn(2+): C33, C36, C52, and C55. A C4-type zinc finger spans residues 33–55 (CPECGEVVYRKDLIANASVCASC).

This sequence belongs to the AccD/PCCB family. In terms of assembly, acetyl-CoA carboxylase is a heterohexamer composed of biotin carboxyl carrier protein (AccB), biotin carboxylase (AccC) and two subunits each of ACCase subunit alpha (AccA) and ACCase subunit beta (AccD). Zn(2+) serves as cofactor.

It localises to the cytoplasm. The enzyme catalyses N(6)-carboxybiotinyl-L-lysyl-[protein] + acetyl-CoA = N(6)-biotinyl-L-lysyl-[protein] + malonyl-CoA. Its pathway is lipid metabolism; malonyl-CoA biosynthesis; malonyl-CoA from acetyl-CoA: step 1/1. Functionally, component of the acetyl coenzyme A carboxylase (ACC) complex. Biotin carboxylase (BC) catalyzes the carboxylation of biotin on its carrier protein (BCCP) and then the CO(2) group is transferred by the transcarboxylase to acetyl-CoA to form malonyl-CoA. The chain is Acetyl-coenzyme A carboxylase carboxyl transferase subunit beta from Synechococcus sp. (strain RCC307).